The following is a 91-amino-acid chain: Long neurotoxin LNTX28 (91 aa).

The N-terminal stretch at 1–21 (MKTLLLTLVVMTIVCLDLGYT) is a signal peptide. 5 disulfides stabilise this stretch: C24–C41, C34–C62, C47–C51, C66–C77, and C78–C83.

This sequence belongs to the three-finger toxin family. Long-chain subfamily. Type II alpha-neurotoxin sub-subfamily. In terms of tissue distribution, expressed by the venom gland.

The protein resides in the secreted. Functionally, binds with high affinity to muscular (alpha-1/CHRNA1) and neuronal (alpha-7/CHRNA7) nicotinic acetylcholine receptor (nAChR) and inhibits acetylcholine from binding to the receptor, thereby impairing neuromuscular and neuronal transmission. In Ophiophagus hannah (King cobra), this protein is Long neurotoxin LNTX28.